A 209-amino-acid polypeptide reads, in one-letter code: uncharacterized protein (209 aa).

This is an uncharacterized protein from Sulfolobus islandicus rod-shaped virus 1 (SIRV-1).